A 580-amino-acid polypeptide reads, in one-letter code: Formate--tetrahydrofolate ligase (580 aa).

83–90 (TPMGEGKT) lines the ATP pocket.

The protein belongs to the formate--tetrahydrofolate ligase family.

The catalysed reaction is (6S)-5,6,7,8-tetrahydrofolate + formate + ATP = (6R)-10-formyltetrahydrofolate + ADP + phosphate. It participates in one-carbon metabolism; tetrahydrofolate interconversion. The chain is Formate--tetrahydrofolate ligase from Haloquadratum walsbyi (strain DSM 16790 / HBSQ001).